The primary structure comprises 407 residues: Phosphopentomutase (407 aa).

Mn(2+) is bound by residues Asp10, Asp306, His311, Asp347, His348, and His359.

Belongs to the phosphopentomutase family. Mn(2+) serves as cofactor.

It localises to the cytoplasm. The enzyme catalyses 2-deoxy-alpha-D-ribose 1-phosphate = 2-deoxy-D-ribose 5-phosphate. It carries out the reaction alpha-D-ribose 1-phosphate = D-ribose 5-phosphate. It participates in carbohydrate degradation; 2-deoxy-D-ribose 1-phosphate degradation; D-glyceraldehyde 3-phosphate and acetaldehyde from 2-deoxy-alpha-D-ribose 1-phosphate: step 1/2. Isomerase that catalyzes the conversion of deoxy-ribose 1-phosphate (dRib-1-P) and ribose 1-phosphate (Rib-1-P) to deoxy-ribose 5-phosphate (dRib-5-P) and ribose 5-phosphate (Rib-5-P), respectively. This is Phosphopentomutase from Yersinia pseudotuberculosis serotype O:1b (strain IP 31758).